Here is a 363-residue protein sequence, read N- to C-terminus: Probable iron/ascorbate oxidoreductase DDB_G0283291 (363 aa).

Positions 197 to 306 (IFNYPSIISS…RISFPLFFDP (110 aa)) constitute a Fe2OG dioxygenase domain. Residues histidine 230, aspartate 232, and histidine 286 each coordinate Fe cation. Arginine 297 provides a ligand contact to 2-oxoglutarate.

The protein belongs to the iron/ascorbate-dependent oxidoreductase family. Requires Fe(2+) as cofactor.

This is Probable iron/ascorbate oxidoreductase DDB_G0283291 from Dictyostelium discoideum (Social amoeba).